A 244-amino-acid polypeptide reads, in one-letter code: Adenosylcobinamide-GDP ribazoletransferase (244 aa).

The next 5 helical transmembrane spans lie at 33–53 (WFAVVGLLVGALVAALGWLGA), 57–77 (PWLAALLMLVTWVWVTGGLHL), 109–129 (FAVITLALQLLAKLVLLMLAV), 132–152 (GVGWSALVLLPAWARLGAVWW), and 176–196 (FWLSWLLLAALSAWLAPVLLL).

The protein belongs to the CobS family. Mg(2+) serves as cofactor.

It localises to the cell inner membrane. The enzyme catalyses alpha-ribazole + adenosylcob(III)inamide-GDP = adenosylcob(III)alamin + GMP + H(+). It catalyses the reaction alpha-ribazole 5'-phosphate + adenosylcob(III)inamide-GDP = adenosylcob(III)alamin 5'-phosphate + GMP + H(+). The protein operates within cofactor biosynthesis; adenosylcobalamin biosynthesis; adenosylcobalamin from cob(II)yrinate a,c-diamide: step 7/7. Its function is as follows. Joins adenosylcobinamide-GDP and alpha-ribazole to generate adenosylcobalamin (Ado-cobalamin). Also synthesizes adenosylcobalamin 5'-phosphate from adenosylcobinamide-GDP and alpha-ribazole 5'-phosphate. In Laribacter hongkongensis (strain HLHK9), this protein is Adenosylcobinamide-GDP ribazoletransferase.